A 256-amino-acid polypeptide reads, in one-letter code: Small ribosomal subunit protein eS1A (256 aa).

At alanine 2 the chain carries N-acetylalanine; partial.

The protein belongs to the eukaryotic ribosomal protein eS1 family. As to quaternary structure, component of the small ribosomal subunit. Mature ribosomes consist of a small (40S) and a large (60S) subunit. The 40S subunit contains about 33 different proteins and 1 molecule of RNA (18S). The 60S subunit contains about 49 different proteins and 3 molecules of RNA (25S, 5.8S and 5S).

The protein localises to the cytoplasm. This Scheffersomyces stipitis (strain ATCC 58785 / CBS 6054 / NBRC 10063 / NRRL Y-11545) (Yeast) protein is Small ribosomal subunit protein eS1A.